Consider the following 229-residue polypeptide: Probable U3 small nucleolar RNA-associated protein 11 (229 aa).

Disordered stretches follow at residues 1–23 (MSSLRNAIQRRAHKERAQPESRK) and 199–229 (KKPGRKRKLREDEIENQTSRPVYKWRAQRKR).

The protein belongs to the UTP11 family. In terms of assembly, component of the ribosomal small subunit (SSU) processome.

The protein resides in the nucleus. The protein localises to the nucleolus. In terms of biological role, involved in nucleolar processing of pre-18S ribosomal RNA. In Oryza sativa subsp. japonica (Rice), this protein is Probable U3 small nucleolar RNA-associated protein 11.